A 297-amino-acid chain; its full sequence is N-acetylmuramic acid 6-phosphate etherase (297 aa).

Residues 55-218 (AAAALTRGGR…STGAMVKCGK (164 aa)) enclose the SIS domain. Residue Glu-83 is the Proton donor of the active site. The active site involves Glu-114.

The protein belongs to the GCKR-like family. MurNAc-6-P etherase subfamily. Homodimer.

The catalysed reaction is N-acetyl-D-muramate 6-phosphate + H2O = N-acetyl-D-glucosamine 6-phosphate + (R)-lactate. It functions in the pathway amino-sugar metabolism; 1,6-anhydro-N-acetylmuramate degradation. It participates in amino-sugar metabolism; N-acetylmuramate degradation. Its pathway is cell wall biogenesis; peptidoglycan recycling. Its function is as follows. Specifically catalyzes the cleavage of the D-lactyl ether substituent of MurNAc 6-phosphate, producing GlcNAc 6-phosphate and D-lactate. Together with AnmK, is also required for the utilization of anhydro-N-acetylmuramic acid (anhMurNAc) either imported from the medium or derived from its own cell wall murein, and thus plays a role in cell wall recycling. The sequence is that of N-acetylmuramic acid 6-phosphate etherase from Cronobacter sakazakii (strain ATCC BAA-894) (Enterobacter sakazakii).